A 241-amino-acid polypeptide reads, in one-letter code: Large ribosomal subunit protein uL2 (241 aa).

Residues 200–241 (AVDHPHGGGNRQHPGRPTTISRHAPAGRKVGSIAAKRTGKRR) are disordered.

The protein belongs to the universal ribosomal protein uL2 family. As to quaternary structure, part of the 50S ribosomal subunit. Forms a bridge to the 30S subunit in the 70S ribosome.

Functionally, one of the primary rRNA binding proteins. Required for association of the 30S and 50S subunits to form the 70S ribosome, for tRNA binding and peptide bond formation. It has been suggested to have peptidyltransferase activity; this is somewhat controversial. Makes several contacts with the 16S rRNA in the 70S ribosome. The sequence is that of Large ribosomal subunit protein uL2 from Methanosphaera stadtmanae (strain ATCC 43021 / DSM 3091 / JCM 11832 / MCB-3).